Here is a 674-residue protein sequence, read N- to C-terminus: YAP1-binding protein 1 (674 aa).

It belongs to the YBP1 family. As to quaternary structure, interacts with YAP1. Forms a peroxide stress induced complex with YAP1 in the cytoplasm. Systematic proteome-wide 2-hybrid interaction studies suggest that YAP1, HYR1/GPX3, and YBP1 all interact with the nuclear pore complex subunit NUP116, which is involved in nucleocytoplasmic transport.

It localises to the cytoplasm. Its function is as follows. Involved in oxidative stress response and redox homeostasis. Required for hydrogen peroxide-induced oxidation and nuclear localization (activation) of YAP1. Functions probably in concert with HYP1/GPX3, the actual YAP1 modifying enzyme. YBP1 is not required for HYP1/GPX3-independent, diamide-induced oxidation of YAP1. This is YAP1-binding protein 1 from Saccharomyces cerevisiae (strain ATCC 204508 / S288c) (Baker's yeast).